We begin with the raw amino-acid sequence, 462 residues long: Argininosuccinate lyase (462 aa).

It belongs to the lyase 1 family. Argininosuccinate lyase subfamily.

It is found in the cytoplasm. It carries out the reaction 2-(N(omega)-L-arginino)succinate = fumarate + L-arginine. The protein operates within amino-acid biosynthesis; L-arginine biosynthesis; L-arginine from L-ornithine and carbamoyl phosphate: step 3/3. The protein is Argininosuccinate lyase of Nitratiruptor sp. (strain SB155-2).